Consider the following 144-residue polypeptide: Large ribosomal subunit protein uL16 (144 aa).

The span at 1–19 (MLLPKRVKYRRQHRPKTTG) shows a compositional bias: basic residues. The disordered stretch occupies residues 1-23 (MLLPKRVKYRRQHRPKTTGRSKG).

Belongs to the universal ribosomal protein uL16 family. Part of the 50S ribosomal subunit.

In terms of biological role, binds 23S rRNA and is also seen to make contacts with the A and possibly P site tRNAs. The protein is Large ribosomal subunit protein uL16 of Staphylococcus aureus (strain Mu50 / ATCC 700699).